The following is a 120-amino-acid chain: NAD(P)H-quinone oxidoreductase subunit 3, chloroplastic (120 aa).

3 helical membrane passes run 9 to 29 (FFWAFLIISILVPILAFFISG), 64 to 84 (MFALVFVVFDVETVFLYPWAM), and 88 to 108 (VLGVSVFIEAFIFVLILIIGL).

This sequence belongs to the complex I subunit 3 family. As to quaternary structure, NDH is composed of at least 16 different subunits, 5 of which are encoded in the nucleus.

It is found in the plastid. The protein localises to the chloroplast thylakoid membrane. It catalyses the reaction a plastoquinone + NADH + (n+1) H(+)(in) = a plastoquinol + NAD(+) + n H(+)(out). The enzyme catalyses a plastoquinone + NADPH + (n+1) H(+)(in) = a plastoquinol + NADP(+) + n H(+)(out). Its function is as follows. NDH shuttles electrons from NAD(P)H:plastoquinone, via FMN and iron-sulfur (Fe-S) centers, to quinones in the photosynthetic chain and possibly in a chloroplast respiratory chain. The immediate electron acceptor for the enzyme in this species is believed to be plastoquinone. Couples the redox reaction to proton translocation, and thus conserves the redox energy in a proton gradient. In Atropa belladonna (Belladonna), this protein is NAD(P)H-quinone oxidoreductase subunit 3, chloroplastic.